The following is a 477-amino-acid chain: Argininosuccinate lyase (477 aa).

This sequence belongs to the lyase 1 family. Argininosuccinate lyase subfamily.

It localises to the cytoplasm. It catalyses the reaction 2-(N(omega)-L-arginino)succinate = fumarate + L-arginine. Its pathway is amino-acid biosynthesis; L-arginine biosynthesis; L-arginine from L-ornithine and carbamoyl phosphate: step 3/3. The polypeptide is Argininosuccinate lyase (Corynebacterium efficiens (strain DSM 44549 / YS-314 / AJ 12310 / JCM 11189 / NBRC 100395)).